The sequence spans 394 residues: DNA replication and repair protein RecF (394 aa).

Gly-30–Thr-37 is an ATP binding site.

The protein belongs to the RecF family.

The protein resides in the cytoplasm. In terms of biological role, the RecF protein is involved in DNA metabolism; it is required for DNA replication and normal SOS inducibility. RecF binds preferentially to single-stranded, linear DNA. It also seems to bind ATP. This is DNA replication and repair protein RecF from Corynebacterium glutamicum (strain ATCC 13032 / DSM 20300 / JCM 1318 / BCRC 11384 / CCUG 27702 / LMG 3730 / NBRC 12168 / NCIMB 10025 / NRRL B-2784 / 534).